The primary structure comprises 1088 residues: Protocadherin-19 (1088 aa).

An N-terminal signal peptide occupies residues 1–24 (MHSKDMDFVQMFVCFLLCWTGVDA). Over 25–678 (VFNLKYTVEE…QEQIGPVNLS (654 aa)) the chain is Extracellular. 6 consecutive Cadherin domains span residues 31-130 (TVEE…APRF), 131-239 (PTNH…NPVF), 240-347 (DEPV…APEI), 351-454 (SENS…PPYF), 455-563 (TKPH…TPVM), and 569-676 (VNGT…GPVN). Positions 34 and 35 each coordinate Ca(2+). N-linked (GlcNAc...) asparagine glycosylation is present at Asn44. Ca(2+) contacts are provided by Asp89 and Asp91. The cysteines at positions 94 and 100 are disulfide-linked. 17 residues coordinate Ca(2+): Asp122, Val123, Asn124, Asp125, Asn126, Glu141, Asp156, Asp158, Asn162, Glu200, Asp213, Asp231, Ser232, Asn233, Asp234, Asn235, and Glu250. N-linked (GlcNAc...) asparagine glycosylation occurs at Asn262. Ca(2+) is bound by residues Asp265, Asp267, and Asn271. Asn284 carries an N-linked (GlcNAc...) asparagine glycan. Residues Asp306, Glu308, Asp339, Ile340, Asn341, Asp342, Asn343, Glu361, and Asp376 each contribute to the Ca(2+) site. N-linked (GlcNAc...) asparagine glycosylation is present at Asn377. Residues Asp378, Asn382, Asp413, and Glu415 each coordinate Ca(2+). N-linked (GlcNAc...) asparagine glycosylation is present at Asn421. The Ca(2+) site is built by Asp428, Asp446, Glu447, Asn448, Asp449, Asn450, Glu465, Asp480, Asp482, Asn486, Asn522, Glu524, and Asp537. The N-linked (GlcNAc...) asparagine glycan is linked to Asn486. Asn546 carries N-linked (GlcNAc...) asparagine glycosylation. Residues Asp555, Val556, Asn557, Asp558, and Asn559 each coordinate Ca(2+). Residue Asn570 is glycosylated (N-linked (GlcNAc...) asparagine). Residues Asp594, Asp596, Asn600, and Asp646 each contribute to the Ca(2+) site. Asn676 carries N-linked (GlcNAc...) asparagine glycosylation. The chain crosses the membrane as a helical span at residues 679 to 699 (LIFIIALGSIAVILFVTMIFV). Residues 700–1088 (AVKCKRDNKE…GSKRLKDIVL (389 aa)) are Cytoplasmic-facing. Disordered stretches follow at residues 792 to 813 (NSRN…GPQQ), 851 to 875 (DMEG…HDVQ), 970 to 1032 (TFGK…ASST), and 1067 to 1088 (TLLQ…DIVL). The span at 859 to 875 (DSGHEESDQTDSEHDVQ) shows a compositional bias: basic and acidic residues. The segment covering 1071–1088 (DGRDKESPGSKRLKDIVL) has biased composition (basic and acidic residues).

As to quaternary structure, homodimer; antiparallel. Interacts with cadherin cdh2; the interaction confers robust cell adhesion activity on pcdh19. In terms of tissue distribution, in the embryo, strongly expressed in the developing nervous system. At 12 hours post fertilization (hpf), shows a segmental expression pattern in the anterior third of the neural keel with strong expression in the presumptive forebrain, cerebellum/rhombomere 1 and rhombomere 4. By 24 hpf, expressed widely in the brain and spinal cord with higher expression levels in the ventral telencephalon, dorsal and central thalamus, optic tectum, central tegmentum, cerebellum and dorsolateral regions of the hindbrain. As development proceeds, expression becomes restricted to the dorsal and/or lateral regions of the central nervous system. Not detected in the spinal cord of two- and three-day old embryos. Expressed in the eye primordium, developing retina, lens and otic vesicle. Expressed in the larval optic tectum at 4 days post-fertilization where it localizes in discrete columns of neurons. Expressed throughout the adult brain with strong expression in the ventromedial telencephalon, periventricular regions of the thalamus and anterior hypothalamus, stratum periventriculare of the optic tectum, dorsal tegmental nucleus, granular regions of the cerebellar body and valvula, and superficial layers of the facial and vagal lobes.

Its subcellular location is the cell membrane. Functionally, calcium-dependent cell-adhesion protein. Essential for the early stages of neurulation in the anterior neural plate. Shows little cell adhesion activity on its own but exhibits robust homophilic cell adhesion when in a complex with cadherin cdh2 and appears to mediate the adhesion while cdh2 acts as a cell adhesion cofactor in the complex. Functions with cdh2 to coordinate cell adhesion and cell movements during neurulation. Contributes to neural progenitor cell patterning with cdh2 by promoting homophilic cell interactions. Regulates the columnar organization of neurons in the optic tectum. This Danio rerio (Zebrafish) protein is Protocadherin-19.